Here is a 159-residue protein sequence, read N- to C-terminus: Capsid protein (159 aa).

At Ser-2 the chain carries N-acetylserine; by host.

Belongs to the virgaviridae capsid protein family.

It is found in the virion. In terms of biological role, capsid protein self-assembles to form rod-shaped virions about 18 nm in diameter with a central canal enclosing the viral genomic RNA. The protein is Capsid protein (CP) of Nicotiana tabacum (Common tobacco).